Here is a 475-residue protein sequence, read N- to C-terminus: Ribulose bisphosphate carboxylase large chain (475 aa).

The propeptide occupies 1-2 (MS). Pro-3 bears the N-acetylproline mark. An N6,N6,N6-trimethyllysine modification is found at Lys-14. Positions 123 and 173 each coordinate substrate. Lys-175 (proton acceptor) is an active-site residue. A substrate-binding site is contributed by Lys-177. Residues Lys-201, Asp-203, and Glu-204 each coordinate Mg(2+). Position 201 is an N6-carboxylysine (Lys-201). Catalysis depends on His-294, which acts as the Proton acceptor. Substrate is bound by residues Arg-295, His-327, and Ser-379.

It belongs to the RuBisCO large chain family. Type I subfamily. As to quaternary structure, heterohexadecamer of 8 large chains and 8 small chains. Mg(2+) serves as cofactor.

Its subcellular location is the plastid. It localises to the chloroplast. The catalysed reaction is 2 (2R)-3-phosphoglycerate + 2 H(+) = D-ribulose 1,5-bisphosphate + CO2 + H2O. It carries out the reaction D-ribulose 1,5-bisphosphate + O2 = 2-phosphoglycolate + (2R)-3-phosphoglycerate + 2 H(+). Its function is as follows. RuBisCO catalyzes two reactions: the carboxylation of D-ribulose 1,5-bisphosphate, the primary event in carbon dioxide fixation, as well as the oxidative fragmentation of the pentose substrate in the photorespiration process. Both reactions occur simultaneously and in competition at the same active site. This is Ribulose bisphosphate carboxylase large chain from Huperzia lucidula (Shining clubmoss).